We begin with the raw amino-acid sequence, 415 residues long: Lipid II:glycine glycyltransferase (415 aa).

The protein belongs to the FemABX family.

The protein localises to the cytoplasm. The catalysed reaction is beta-D-GlcNAc-(1-&gt;4)-Mur2Ac(oyl-L-Ala-D-isoglutaminyl-L-Lys-D-Ala-D-Ala)-di-trans,octa-cis-undecaprenyl diphosphate + glycyl-tRNA(Gly) = beta-D-GlcNAc-(1-&gt;4)-Mur2Ac(oyl-L-Ala-D-isoglutaminyl-L-Lys-(N(6)-Gly)-D-Ala-D-Ala)-di-trans,octa-cis-undecaprenyl diphosphate + tRNA(Gly) + H(+). Its function is as follows. Catalyzes the incorporation of amino acid(s) into the interchain peptide bridge of peptidoglycan, using aminoacyl-tRNA as amino acid donor. This Staphylococcus saprophyticus subsp. saprophyticus (strain ATCC 15305 / DSM 20229 / NCIMB 8711 / NCTC 7292 / S-41) protein is Lipid II:glycine glycyltransferase (femX).